We begin with the raw amino-acid sequence, 593 residues long: Double-stranded RNA-binding protein 2 (593 aa).

DRBM domains are found at residues 1-70 and 87-155; these read MYKN…ELSK and IYKN…ELKQ. The span at 188–197 shows a compositional bias: polar residues; it reads LNQTNGGKTP. Disordered stretches follow at residues 188–221, 357–408, and 546–593; these read LNQTNGGKTPQQKEKQQSSNRPSSRRPSYPKSNA, APDF…ESNQ, and VNSS…KLHI. Positions 205 to 219 are enriched in low complexity; that stretch reads SSNRPSSRRPSYPKS. Over residues 378 to 408 the composition is skewed to polar residues; sequence ESSPASEQESKSHTASSSATRSPSQQLESNQ. The span at 572 to 586 shows a compositional bias: low complexity; it reads RTNTSDTSNAATASS.

Binds double-stranded RNA. The polypeptide is Double-stranded RNA-binding protein 2 (DRB2) (Oryza sativa subsp. japonica (Rice)).